Reading from the N-terminus, the 198-residue chain is Ion-translocating oxidoreductase complex subunit B (198 aa).

A hydrophobic region spans residues 1-28; sequence MIITTVYFILVAIAVLALIFGAILGFAS. In terms of domain architecture, 4Fe-4S spans 34–92; the sequence is EADPIVEKIDALLPQSQCGQCGYPGCKPYAEAIANGDDITKCIPGGQTVIVNIAELMGV. Positions 51, 54, 59, 75, 115, 118, 121, 125, 145, 148, 151, and 155 each coordinate [4Fe-4S] cluster. 2 4Fe-4S ferredoxin-type domains span residues 106 to 135 and 136 to 165; these read MVAF…GTNK and AMHT…MIKV.

Belongs to the 4Fe4S bacterial-type ferredoxin family. RnfB subfamily. As to quaternary structure, the complex is composed of six subunits: RnfA, RnfB, RnfC, RnfD, RnfE and RnfG. Requires [4Fe-4S] cluster as cofactor.

It is found in the cell inner membrane. Part of a membrane-bound complex that couples electron transfer with translocation of ions across the membrane. The protein is Ion-translocating oxidoreductase complex subunit B of Pasteurella multocida (strain Pm70).